A 231-amino-acid chain; its full sequence is Isoprenyl transferase (231 aa).

Asp-14 is a catalytic residue. Asp-14 provides a ligand contact to Mg(2+). Residues 15 to 18 (GNGR), Trp-19, Arg-27, His-31, and 59 to 61 (STE) each bind substrate. Asn-62 acts as the Proton acceptor in catalysis. Substrate is bound by residues Trp-63, Arg-65, Arg-176, and 182–184 (RIS). Glu-195 provides a ligand contact to Mg(2+).

It belongs to the UPP synthase family. As to quaternary structure, homodimer. Mg(2+) is required as a cofactor.

Catalyzes the condensation of isopentenyl diphosphate (IPP) with allylic pyrophosphates generating different type of terpenoids. In Aquifex aeolicus (strain VF5), this protein is Isoprenyl transferase.